We begin with the raw amino-acid sequence, 526 residues long: Peptide chain release factor 3 (526 aa).

A tr-type G domain is found at 9 to 277; sequence DKRRTFAIIS…GIVEWAPKPQ (269 aa). Residues 18–25, 86–90, and 140–143 each bind GTP; these read SHPDAGKT, DTPGH, and NKLD.

Belongs to the TRAFAC class translation factor GTPase superfamily. Classic translation factor GTPase family. PrfC subfamily.

It localises to the cytoplasm. Its function is as follows. Increases the formation of ribosomal termination complexes and stimulates activities of RF-1 and RF-2. It binds guanine nucleotides and has strong preference for UGA stop codons. It may interact directly with the ribosome. The stimulation of RF-1 and RF-2 is significantly reduced by GTP and GDP, but not by GMP. The sequence is that of Peptide chain release factor 3 from Shewanella woodyi (strain ATCC 51908 / MS32).